The chain runs to 147 residues: Hemoglobin subunit gamma-1 (147 aa).

A Globin domain is found at 3 to 147 (NFTAEDKAAI…VASALGSRYH (145 aa)). The residue at position 13 (Thr-13) is a Phosphothreonine. Residues Ser-45, Ser-51, and Ser-53 each carry the phosphoserine modification. Residue Lys-60 is modified to N6-acetyllysine. His-64 lines the heme b pocket. Lys-83 carries the post-translational modification N6-acetyllysine. Position 93 (His-93) interacts with heme b. Position 94 is an S-nitrosocysteine (Cys-94). Residue Ser-140 is modified to Phosphoserine.

Belongs to the globin family. In terms of assembly, heterotetramer of two alpha chains and two gamma chains in fetal hemoglobin (Hb F). Red blood cells.

In terms of biological role, gamma chains make up the fetal hemoglobin F, in combination with alpha chains. The sequence is that of Hemoglobin subunit gamma-1 (HBG1) from Plecturocebus moloch (Dusky titi monkey).